A 130-amino-acid polypeptide reads, in one-letter code: S-protein homolog 30 (130 aa).

Residues Asn-64 and Asn-77 are each glycosylated (N-linked (GlcNAc...) asparagine).

It belongs to the plant self-incompatibility (S1) protein family.

It is found in the secreted. The sequence is that of S-protein homolog 30 from Arabidopsis thaliana (Mouse-ear cress).